The following is a 512-amino-acid chain: D-alanine--D-alanyl carrier protein ligase (512 aa).

152-153 (TS) is an ATP binding site. Aspartate 199 contributes to the D-alanine binding site. Residue 294–299 (NAYGPT) participates in ATP binding. Valine 303 serves as a coordination point for D-alanine. ATP contacts are provided by residues aspartate 385, 397–400 (YGGR), and lysine 499. Lysine 499 serves as a coordination point for D-alanine.

The protein belongs to the ATP-dependent AMP-binding enzyme family. DltA subfamily.

It is found in the cytoplasm. The enzyme catalyses holo-[D-alanyl-carrier protein] + D-alanine + ATP = D-alanyl-[D-alanyl-carrier protein] + AMP + diphosphate. Its pathway is cell wall biogenesis; lipoteichoic acid biosynthesis. Catalyzes the first step in the D-alanylation of lipoteichoic acid (LTA), the activation of D-alanine and its transfer onto the D-alanyl carrier protein (Dcp) DltC. In an ATP-dependent two-step reaction, forms a high energy D-alanyl-AMP intermediate, followed by transfer of the D-alanyl residue as a thiol ester to the phosphopantheinyl prosthetic group of the Dcp. D-alanylation of LTA plays an important role in modulating the properties of the cell wall in Gram-positive bacteria, influencing the net charge of the cell wall. In Streptococcus pyogenes serotype M18 (strain MGAS8232), this protein is D-alanine--D-alanyl carrier protein ligase.